The sequence spans 210 residues: MSSIFGKLREFVGFGEPTGYDYDYDEMEGDDYQGLYPAEPAQSLPTRSEEPHPRPSEPEMRSPVNTSAVTSTAMNPPMNQSMNNVVGMPGSGKWWGAVAEVIVMEPRSFEEMPQVIQALRERKSVVLNLTMMEPDQAQRAVDFVAGATYTIDGHQERIGESIFLFTPSCVQVSTQAGGQSHTLRDIPQAQIHTRPPAPAWTAEPLSRIAQ.

The disordered stretch occupies residues 13-78 (GFGEPTGYDY…VTSTAMNPPM (66 aa)). Positions 22-31 (YDYDEMEGDD) are enriched in acidic residues. Residues 47–60 (RSEEPHPRPSEPEM) show a composition bias toward basic and acidic residues. A compositionally biased stretch (polar residues) spans 64 to 78 (VNTSAVTSTAMNPPM).

Belongs to the SepF family. As to quaternary structure, homodimer. Interacts with FtsZ.

It localises to the cytoplasm. In terms of biological role, cell division protein that is part of the divisome complex and is recruited early to the Z-ring. Probably stimulates Z-ring formation, perhaps through the cross-linking of FtsZ protofilaments. Its function overlaps with FtsA. This is Cell division protein SepF from Cyanothece sp. (strain PCC 7425 / ATCC 29141).